We begin with the raw amino-acid sequence, 208 residues long: MFAIVDYDTGNTRNLKKAFDYLQVSTILTADPQQLAAADAVILPGVGAFAAAMAALKERQLVGVLQALARSGKPVLGICLGMQLLFESSSEYGEHAGLGLLSGRVSALPTDLNVKVPQMGWNQNELRRPDSPFASIDAAYTYFVHSYYAVCPATEIVATVQHGVQVPSIVQQQNVIGMQFHPEKSGRVGLQQLAAFKEMVSANDFSSN.

Residues 1–206 (MFAIVDYDTG…KEMVSANDFS (206 aa)) form the Glutamine amidotransferase type-1 domain. Catalysis depends on Cys79, which acts as the Nucleophile. Active-site residues include His181 and Glu183.

As to quaternary structure, heterodimer of HisH and HisF.

It is found in the cytoplasm. It carries out the reaction 5-[(5-phospho-1-deoxy-D-ribulos-1-ylimino)methylamino]-1-(5-phospho-beta-D-ribosyl)imidazole-4-carboxamide + L-glutamine = D-erythro-1-(imidazol-4-yl)glycerol 3-phosphate + 5-amino-1-(5-phospho-beta-D-ribosyl)imidazole-4-carboxamide + L-glutamate + H(+). The catalysed reaction is L-glutamine + H2O = L-glutamate + NH4(+). It participates in amino-acid biosynthesis; L-histidine biosynthesis; L-histidine from 5-phospho-alpha-D-ribose 1-diphosphate: step 5/9. In terms of biological role, IGPS catalyzes the conversion of PRFAR and glutamine to IGP, AICAR and glutamate. The HisH subunit catalyzes the hydrolysis of glutamine to glutamate and ammonia as part of the synthesis of IGP and AICAR. The resulting ammonia molecule is channeled to the active site of HisF. The sequence is that of Imidazole glycerol phosphate synthase subunit HisH from Lactiplantibacillus plantarum (strain ATCC BAA-793 / NCIMB 8826 / WCFS1) (Lactobacillus plantarum).